The sequence spans 458 residues: Delta(8)-fatty-acid desaturase (458 aa).

Positions 16–100 (KKYITSKELK…LKDYQVSDIS (85 aa)) constitute a Cytochrome b5 heme-binding domain. Residues His51 and His74 each coordinate heme. 2 helical membrane passes run 122 to 142 (GVIY…YGVL) and 147 to 167 (FWIH…IAYL). Positions 169–173 (HDAGH) match the Histidine box-1 motif. Residues 185–205 (FAGIFIGNCITGISIAWWKWT) form a helical membrane-spanning segment. Residues 206–210 (HNAHH) carry the Histidine box-2 motif. The next 3 helical transmembrane spans lie at 264 to 284 (YYPI…LLLI), 293 to 313 (GLNI…VSRL), and 320 to 340 (VAFV…FTLN). Positions 383 to 387 (QLEHH) match the Histidine box-3 motif.

Belongs to the fatty acid desaturase type 1 family. Fe cation is required as a cofactor.

Its subcellular location is the membrane. It carries out the reaction an N-acyl-(4R)-4-hydroxysphinganine + 2 Fe(II)-[cytochrome b5] + O2 + 2 H(+) = a (4R,8E)-4-hydroxysphingenine ceramide + 2 Fe(III)-[cytochrome b5] + 2 H2O. The enzyme catalyses an N-acyl-(4R)-4-hydroxysphinganine + 2 Fe(II)-[cytochrome b5] + O2 + 2 H(+) = a (4R,8Z)-4-hydroxysphing-8-enine ceramide + 2 Fe(III)-[cytochrome b5] + 2 H2O. Plays a major role as delta(8)-fatty-acid desaturase which introduces a double bond at the 8-position in the long-chain base (LCB) of ceramides with or without a hydroxy group at the 4-position. The enzyme produces both the 8E and 8Z isomers. This structural modification contributes to the quantitative partitioning of ceramides between the two major sphingolipid classes, glucosylceramides and glycosylinositolphosphoryl ceramides. Sphingolipids are important membrane components involved in environmental stress responses, such as resistance to chilling, and act as cell signaling molecules. This chain is Delta(8)-fatty-acid desaturase (sld1), found in Helianthus annuus (Common sunflower).